Consider the following 142-residue polypeptide: Large ribosomal subunit protein uL11 (142 aa).

It belongs to the universal ribosomal protein uL11 family. In terms of assembly, part of the ribosomal stalk of the 50S ribosomal subunit. Interacts with L10 and the large rRNA to form the base of the stalk. L10 forms an elongated spine to which L12 dimers bind in a sequential fashion forming a multimeric L10(L12)X complex. One or more lysine residues are methylated.

Functionally, forms part of the ribosomal stalk which helps the ribosome interact with GTP-bound translation factors. The polypeptide is Large ribosomal subunit protein uL11 (Mycobacterium ulcerans (strain Agy99)).